Here is a 391-residue protein sequence, read N- to C-terminus: Homocysteine-responsive endoplasmic reticulum-resident ubiquitin-like domain member 1 protein (391 aa).

Residue Met1 is modified to N-acetylmethionine. The Cytoplasmic segment spans residues 1-263 (MESETEPEPV…VEEDDEINRD (263 aa)). The Ubiquitin-like domain occupies 10–72 (VTLLVKSPNQ…LLDHQCLRDL (63 aa)). Residues 100-126 (KVAESTEEPAGSNRGQYPEDSSSDGLR) form a disordered region. The segment covering 112-124 (NRGQYPEDSSSDG) has biased composition (polar residues). The interval 115–200 (QYPEDSSSDG…ASGAFVPPPS (86 aa)) is interaction with UBQLN1. The residue at position 135 (Ser135) is a Phosphoserine. The segment at 170-190 (LSWFQQIYARQYYMQYLAATA) is interaction with SYVN1. Residues 264–284 (WLDWTYSAATFSVFLSILYFY) form a helical membrane-spanning segment. At 285–289 (SSLSR) the chain is on the lumenal side. A helical membrane pass occupies residues 290–310 (FLMVMGATVVMYLHHVGWFPF). At 311 to 391 (RPRPVQNFPN…LPEGPPAIAN (81 aa)) the chain is on the cytoplasmic side. The segment at 318 to 359 (FPNDGPPPDVVNQDPNNNLQEGTDPETEDPNHLPPDRDVLDG) is disordered. Residues 346-357 (DPNHLPPDRDVL) show a composition bias toward basic and acidic residues.

Interacts with PSEN1 and PSEN2. Interacts with UBXN6. Interacts with UBQLN1, UBQLN2 and UBQLN4. Component of the HRD1 complex, which comprises at least SYNV1/HRD1, FAM8A1, HERPUD1/HERP, OS9, SEL1L and UBE2J1. FAM8A1 binding to SYNV1 may promote recruitment of HERPUD1 to the HRD1 complex. As to expression, widely expressed; in the brain, expression seems to be restricted to neurons and vascular smooth muscle cells. Present in activated microglia in senile plaques in the brain of patients with Alzheimer disease.

It localises to the endoplasmic reticulum membrane. Functionally, component of the endoplasmic reticulum quality control (ERQC) system also called ER-associated degradation (ERAD) involved in ubiquitin-dependent degradation of misfolded endoplasmic reticulum proteins. Could enhance presenilin-mediated amyloid-beta protein 40 generation. Binds to ubiquilins and this interaction is required for efficient degradation of CD3D via the ERAD pathway. In Homo sapiens (Human), this protein is Homocysteine-responsive endoplasmic reticulum-resident ubiquitin-like domain member 1 protein (HERPUD1).